The sequence spans 435 residues: Cyclic 2,3-diphosphoglycerate synthetase (435 aa).

The protein belongs to the cyclic 2,3-diphosphoglycerate synthetase family.

It is found in the cytoplasm. The enzyme catalyses (2R)-2,3-bisphosphoglycerate + ATP + H(+) = cyclic (2R)-2,3-bisphosphoglycerate + ADP + phosphate. Catalyzes the formation of cyclic 2,3-diphosphoglycerate (cDPG) by formation of an intramolecular phosphoanhydride bond at the expense of ATP. The protein is Cyclic 2,3-diphosphoglycerate synthetase of Pyrococcus horikoshii (strain ATCC 700860 / DSM 12428 / JCM 9974 / NBRC 100139 / OT-3).